Reading from the N-terminus, the 474-residue chain is Fumarate hydratase class II (474 aa).

Residues 104 to 106, 128 to 131, 138 to 140, and T186 contribute to the substrate site; these read SGT, HPND, and SSN. H187 (proton donor/acceptor) is an active-site residue. The active site involves S318. Residues S319 and 324–326 contribute to the substrate site; that span reads KVN.

It belongs to the class-II fumarase/aspartase family. Fumarase subfamily. Homotetramer.

The protein resides in the cytoplasm. The enzyme catalyses (S)-malate = fumarate + H2O. Its pathway is carbohydrate metabolism; tricarboxylic acid cycle; (S)-malate from fumarate: step 1/1. In terms of biological role, involved in the TCA cycle. Catalyzes the stereospecific interconversion of fumarate to L-malate. This is Fumarate hydratase class II from Mycobacterium bovis (strain ATCC BAA-935 / AF2122/97).